The primary structure comprises 199 residues: ATP-dependent Clp protease proteolytic subunit 2 (199 aa).

The active-site Nucleophile is S98. The active site involves H123.

Belongs to the peptidase S14 family. Fourteen ClpP subunits assemble into 2 heptameric rings which stack back to back to give a disk-like structure with a central cavity, resembling the structure of eukaryotic proteasomes.

Its subcellular location is the cytoplasm. It catalyses the reaction Hydrolysis of proteins to small peptides in the presence of ATP and magnesium. alpha-casein is the usual test substrate. In the absence of ATP, only oligopeptides shorter than five residues are hydrolyzed (such as succinyl-Leu-Tyr-|-NHMec, and Leu-Tyr-Leu-|-Tyr-Trp, in which cleavage of the -Tyr-|-Leu- and -Tyr-|-Trp bonds also occurs).. In terms of biological role, cleaves peptides in various proteins in a process that requires ATP hydrolysis. Has a chymotrypsin-like activity. Plays a major role in the degradation of misfolded proteins. The chain is ATP-dependent Clp protease proteolytic subunit 2 from Corynebacterium efficiens (strain DSM 44549 / YS-314 / AJ 12310 / JCM 11189 / NBRC 100395).